The following is a 271-amino-acid chain: MQLFPVILPTLCVFLHLLISGSGSTPPLTHSNQQVAATRWLPATATWYGSAEGDGSSGGACGYGSLVDVKPFKARVGAVSPILFKGGEGCGACYKVRCLDKTICSKRAVTIIATDQSPSGPSAKAKHTHFDLSGAAFGHMAIPGHNGVIRNRGLLNILYRRTACKYRGKNIAFHVNAGSTDYWLSLLIEYEDGEGDIGSMHIRQAGSKEWISMKHIWGANWCIVEGPLKGPFSVKLTTLSNNKTLSATDVIPSNWVPKATYTSRLNFSPVL.

The signal sequence occupies residues Met-1–Ser-24. Residues Gly-58 to Lys-169 enclose the Expansin-like EG45 domain. 3 disulfides stabilise this stretch: Cys-61–Cys-90, Cys-93–Cys-164, and Cys-98–Cys-104. Residues Tyr-182–Ser-263 form the Expansin-like CBD domain. Residue Asn-242 is glycosylated (N-linked (GlcNAc...) asparagine).

It belongs to the expansin family. Expansin B subfamily.

It is found in the secreted. It localises to the cell wall. The protein localises to the membrane. Functionally, may cause loosening and extension of plant cell walls by disrupting non-covalent bonding between cellulose microfibrils and matrix glucans. No enzymatic activity has been found. This is Expansin-B1 (EXPB1) from Arabidopsis thaliana (Mouse-ear cress).